The sequence spans 235 residues: Glutathione S-transferase L3 (235 aa).

The GST N-terminal domain maps to 27-108; that stretch reads GTTRLYTSYV…YLDNTFEGPS (82 aa). Glutathione-binding positions include 37 to 38, 65 to 66, 79 to 80, and 92 to 93; these read CP, NR, KV, and ES. Residues 86 to 230 form the GST C-terminal domain; sequence NGKIIGESLD…MDPKEIVEVF (145 aa).

This sequence belongs to the GST superfamily. Lambda family.

It is found in the cytoplasm. The protein resides in the cytosol. It carries out the reaction RX + glutathione = an S-substituted glutathione + a halide anion + H(+). In terms of biological role, catalyzes the glutathione-dependent reduction of S-glutathionylquercetin to quercetin. In Arabidopsis thaliana (Mouse-ear cress), this protein is Glutathione S-transferase L3 (GSTL3).